We begin with the raw amino-acid sequence, 266 residues long: Glucosamine-6-phosphate deaminase (266 aa).

Asp-72 (proton acceptor; for enolization step) is an active-site residue. Asp-141 (for ring-opening step) is an active-site residue. Catalysis depends on His-143, which acts as the Proton acceptor; for ring-opening step. The active-site For ring-opening step is Glu-148.

This sequence belongs to the glucosamine/galactosamine-6-phosphate isomerase family. NagB subfamily. Homohexamer.

The enzyme catalyses alpha-D-glucosamine 6-phosphate + H2O = beta-D-fructose 6-phosphate + NH4(+). Its pathway is amino-sugar metabolism; N-acetylneuraminate degradation; D-fructose 6-phosphate from N-acetylneuraminate: step 5/5. Allosterically activated by N-acetylglucosamine 6-phosphate (GlcNAc6P). Its function is as follows. Catalyzes the reversible isomerization-deamination of glucosamine 6-phosphate (GlcN6P) to form fructose 6-phosphate (Fru6P) and ammonium ion. The sequence is that of Glucosamine-6-phosphate deaminase from Vibrio vulnificus (strain CMCP6).